A 220-amino-acid polypeptide reads, in one-letter code: Small ribosomal subunit protein eS8 (220 aa).

Disordered regions lie at residues 1–41 (MGIS…LSSN) and 131–151 (AKKD…KKSN). Residues 8-26 (MHKRRATGGKQKAWRKKRK) are compositionally biased toward basic residues.

The protein belongs to the eukaryotic ribosomal protein eS8 family.

The chain is Small ribosomal subunit protein eS8 (RPS8) from Oryza sativa subsp. japonica (Rice).